The sequence spans 454 residues: MSELQKQWAKARLGSQALGQPPAEMPITTTMPEFNEADEDKEMAGPSPGGFPFDDDSSSASSVSSTGTVIPSPGRALFARPQGFASRSMDPIPWTTYFERELFLKEEAGPDSGSRTSNKNKPTSITYHAYLTSPVGKGPLFVTHHGAGSSGLSFAVLSSEIRKRLPNAGILSLDARGHGSTTVTAASSVPGEGDETTGQAPPPLDLSLSTLASDLFTVIQLTRTAMHWPELPPIILVGHSLGGAVVTELAKSYRLGPSLLGYAVLDVVEGCAMDALQSMQTYLSTRPQGFASLKDGIDWHVRSRTIRNSTSARTSVPGLLAPVEELQRPELQQLPRGVAGTQGTAKPWRWKTDLAATQPFWEDWFVGLSKKFLEARGGKMLLLAGTDRLDTELTIGQMQGKYALQVFPEAGHFIHEDLPEKTAIALVDFHRRNDRSQLVLPPKVSDLLAQGKKV.

Disordered stretches follow at residues 1–69 and 181–203; these read MSEL…TGTV and TTVT…APPP. The span at 44 to 69 shows a compositional bias: low complexity; the sequence is AGPSPGGFPFDDDSSSASSVSSTGTV. Active-site residues include Ser240, Asp266, and His412.

This sequence belongs to the AB hydrolase superfamily.

It carries out the reaction [phosphatase 2A protein]-C-terminal L-leucine methyl ester + H2O = [phosphatase 2A protein]-C-terminal L-leucine + methanol + H(+). Its function is as follows. Demethylates proteins that have been reversibly carboxymethylated. Demethylates the phosphatase PP2A catalytic subunit. The protein is Protein phosphatase methylesterase 1 (pme-1) of Neurospora crassa (strain ATCC 24698 / 74-OR23-1A / CBS 708.71 / DSM 1257 / FGSC 987).